The sequence spans 179 residues: NADH dehydrogenase [ubiquinone] 1 beta subcomplex subunit 9 (179 aa).

Ala-2 carries the post-translational modification N-acetylalanine. At Ser-85 the chain carries Phosphoserine. The disordered stretch occupies residues 136-162; sequence EVKQLQEETPPGGPLTEALPPARKEGD.

The protein belongs to the complex I LYR family. In terms of assembly, mammalian complex I is composed of 45 different subunits.

The protein localises to the mitochondrion inner membrane. Accessory subunit of the mitochondrial membrane respiratory chain NADH dehydrogenase (Complex I), that is believed to be not involved in catalysis. Complex I functions in the transfer of electrons from NADH to the respiratory chain. The immediate electron acceptor for the enzyme is believed to be ubiquinone. This chain is NADH dehydrogenase [ubiquinone] 1 beta subcomplex subunit 9 (NDUFB9), found in Homo sapiens (Human).